The primary structure comprises 502 residues: Probable glycerol kinase (502 aa).

Position 11 (T11) interacts with substrate. R15 contributes to the ATP binding site. Positions 85, 140, and 246 each coordinate substrate. Residues T268, G313, and 416–420 each bind ATP; that span reads GMIAN.

This sequence belongs to the FGGY kinase family.

It catalyses the reaction glycerol + ATP = sn-glycerol 3-phosphate + ADP + H(+). It functions in the pathway polyol metabolism; glycerol degradation via glycerol kinase pathway; sn-glycerol 3-phosphate from glycerol: step 1/1. This is Probable glycerol kinase from Caenorhabditis elegans.